Consider the following 280-residue polypeptide: Small ribosomal subunit protein uS3 (280 aa).

Residues 38-106 (IRRLLSTGLE…QVQLNILEVR (69 aa)) form the KH type-2 domain. The segment at 215–280 (AAAAPAGAER…PAAEPQSTES (66 aa)) is disordered. Positions 238–280 (SGASGTTATGTEAGRAAASADESTAAGQPAEAAPAAEPQSTES) are enriched in low complexity.

This sequence belongs to the universal ribosomal protein uS3 family. Part of the 30S ribosomal subunit. Forms a tight complex with proteins S10 and S14.

Binds the lower part of the 30S subunit head. Binds mRNA in the 70S ribosome, positioning it for translation. The chain is Small ribosomal subunit protein uS3 from Mycolicibacterium paratuberculosis (strain ATCC BAA-968 / K-10) (Mycobacterium paratuberculosis).